The chain runs to 356 residues: cGAMP-activated phospholipase (356 aa).

The PNPLA domain maps to 15–206 (LSLNGGGARG…VANNPSYIGL (192 aa)). The GXGXXG signature appears at 19–24 (GGGARG). The GXSXG motif lies at 58 to 62 (GTSIG). The active-site Nucleophile is serine 60. Aspartate 193 (proton acceptor) is an active-site residue. A DGA/G motif is present at residues 193-195 (DGG).

The protein belongs to the patatin family.

It carries out the reaction a 1,2-diacyl-sn-glycero-3-phosphocholine + H2O = a 2-acyl-sn-glycero-3-phosphocholine + a fatty acid + H(+). It catalyses the reaction 1,2-di-(9Z-octadecenoyl)-sn-glycero-3-phosphoethanolamine + 2 H2O = sn-glycero-3-phosphoethanolamine + 2 (9Z)-octadecenoate + 2 H(+). Its activity is regulated as follows. Phospholipase activity is specifically activated upon 3',3'-cGAMP binding, which is produced by the cognate cyclic nucleotide synthase encoded in the same operon. In terms of biological role, effector phospholipase of a CBASS antiviral system. CBASS (cyclic oligonucleotide-based antiphage signaling system) provides immunity against bacteriophages. The CD-NTase protein (DncV) synthesizes cyclic nucleotides in response to infection; these serve as specific second messenger signals. The signals activate a diverse range of effectors, leading to bacterial cell death and thus abortive phage infection. A type II-A(GA) CBASS system. Functionally, phospholipase that is activated upon binding to the cyclic dinucleotide (CDN) second messenger 3',3'-cyclic GMP-AMP (cGAMP). Degrades phospholipids in the cell membrane. Its function is as follows. Protects E.coli against phage infection. When capV and dncV are introduced in E.coli MG1655 there is 1000-fold protection against phage P1; protection against other phage (T2, T4, T5, T6 and lambda-vir) requires the 2 subsequent genes (cap2 and cap3). Upon P1 phage infection the activating molecule is produced between 30 and 40 minutes. Activation leads to bacterial cell lysis and death, which occurs before the phage has finished its replication cycle, thus protecting non-infected bacteria by aborting the phage infection and preventing its propagation. In another paper the capV-dncV-cap2-cap3 operon gives 10(4)-10(5)-fold protection against phages lambda, T2, T4 and T6, about 1000-fold protection against P1 and 10-fold protection against T5. This Escherichia coli (strain TW11681) protein is cGAMP-activated phospholipase.